The primary structure comprises 892 residues: Iodate reductase subunit IdrA (892 aa).

3 residues coordinate [3Fe-4S] cluster: C27, C30, and C34. A compositionally biased stretch (gly residues) spans 431 to 442 (RGGGHQRGGLSA). The segment at 431–452 (RGGGHQRGGLSAGGNSEWLSPE) is disordered.

The protein belongs to the prokaryotic molybdopterin-containing oxidoreductase family. In terms of assembly, the iodate reductase (Idr) complex is composed of a molybdopterin-dependent iodate reductase (IdrA and IdrB subunits) and two associated peroxidases (IdrP1 and IdrP2). [3Fe-4S] cluster is required as a cofactor. The cofactor is Mo-bis(molybdopterin guanine dinucleotide).

Its subcellular location is the periplasm. Its function is as follows. Involved in iodate respiration. Probably catalyzes the reduction of iodate (IO(3)(-)) to hypoiodous acid (HIO) and H(2)O(2), using a reduced cytochrome c as the electron donor. This Pseudomonas sp. (strain SCT) protein is Iodate reductase subunit IdrA.